Reading from the N-terminus, the 705-residue chain is FAD-dependent monooxygenase ATEG_03635 (705 aa).

FAD contacts are provided by residues 86-115, Val208, 308-310, and Ser408; these read DVLICGAGPFGLELGLILARQGISFRIVDK and RFY.

Belongs to the PheA/TfdB FAD monooxygenase family. Requires FAD as cofactor.

It functions in the pathway secondary metabolite biosynthesis. Its function is as follows. FAD-dependent monooxygenase; part of the cluster A that mediates the biosynthesis of azasperpyranones, members of the azaphilone family that exhibit anti-cancer activities. Azasperpyranones are synthesized by 2 clusters, A and B. Cluster A is responsible for the production of the polyhydric phenol moiety while the azaphilonoid scaffold is produced by the cluster B. The non-reducing polyketide synthase ATEG_03629 produces 5-methyl orsellinic acid, which is then reduced to 5-methyl orsellinic aldehyde by the NRPS-like protein ATEG_03630. 5-methyl orsellinic aldehyde is then first hydroxylated by the FAD-dependent monooxygenase ATEG_03635 and subsequently hydroxylated by the cytochrome P450 monooxygenase ATEG_03631 to produce the unstable polyhydric phenol precursor of azasperpyranones. On the other hand, the polyketide synthase ATEG_07659 is responsible for producing the 3,5-dimethyloctadienone moiety from acetyl-CoA, three malonyl-CoA, and two S-adenosyl methionines (SAM). The 3,5-dimethyloctadienone moiety is then loaded onto the SAT domain of ATEG_07661 and extended with four malonyl-CoA and one SAM, which leads to the formation of 2,4-dihydroxy-6-(5,7-dimethyl-2-oxo-trans-3-trans-5-nonadienyl)-3-methylbenzaldehyde (compound 8) after reductive release and aldol condensation. The FAD-dependent monooxygenase ATEG_07662 is the next enzyme in the biosynthesis sequence and hydroxylates the side chain at the benzylic position of compound 8. In Aspergillus nidulans, afoF, the ortholog of the FAD-dependent oxygenase ATEG_07660, is the key enzyme for the biosynthesis of asperfuranone by catalyzing the hydroxylation at C-8 of to prevent the formation of a six-membered ring hemiacetal intermediate and thus facilitating the formation of a five-membered ring to produce asperfuranone. In Aspergillus terreus, ATEG_07660 is probably not functional, which leads to the formation of the six-membered ring hemiacetal intermediate presperpyranone instead of asperfuranone. Finally, ATEG_03636 is involved in the condensation of the polyhydric phenol moiety produced by cluster A and the perasperpyranone precursor produced by cluster B, to yield azasperpyranone A. Further modifications of azasperpyranone A result in the production of derivatives, including azasperpyranone B to F. The polypeptide is FAD-dependent monooxygenase ATEG_03635 (Aspergillus terreus (strain NIH 2624 / FGSC A1156)).